Here is a 235-residue protein sequence, read N- to C-terminus: UPF0749 protein YlxX (235 aa).

A helical membrane pass occupies residues 6 to 26 (SFISISVLMVIFGLMISVQFN).

It belongs to the UPF0749 family.

Its subcellular location is the cell membrane. This Bacillus subtilis (strain 168) protein is UPF0749 protein YlxX (ylxX).